The sequence spans 689 residues: Glycine--tRNA ligase beta subunit (689 aa).

This sequence belongs to the class-II aminoacyl-tRNA synthetase family. In terms of assembly, tetramer of two alpha and two beta subunits.

It is found in the cytoplasm. The catalysed reaction is tRNA(Gly) + glycine + ATP = glycyl-tRNA(Gly) + AMP + diphosphate. The protein is Glycine--tRNA ligase beta subunit of Lacticaseibacillus paracasei (strain ATCC 334 / BCRC 17002 / CCUG 31169 / CIP 107868 / KCTC 3260 / NRRL B-441) (Lactobacillus paracasei).